Consider the following 348-residue polypeptide: 3-keto-steroid reductase (348 aa).

Residues L18, T41, and R47 each contribute to the NADP(+) site. Residues S180 and Y203 each act as proton donor in the active site. NADP(+)-binding residues include Y203, K207, and S238. The Lowers pKa of active site Tyr role is filled by K207.

This sequence belongs to the short-chain dehydrogenases/reductases (SDR) family. ERG27 subfamily.

The enzyme catalyses a 3beta-hydroxysteroid + NADP(+) = a 3-oxosteroid + NADPH + H(+). Its pathway is steroid biosynthesis; zymosterol biosynthesis; zymosterol from lanosterol: step 5/6. In terms of biological role, responsible for the reduction of the keto group on the C-3 of sterols. The protein is 3-keto-steroid reductase (ERG27) of Candida glabrata (strain ATCC 2001 / BCRC 20586 / JCM 3761 / NBRC 0622 / NRRL Y-65 / CBS 138) (Yeast).